A 365-amino-acid polypeptide reads, in one-letter code: tRNA 2-selenouridine synthase (365 aa).

In terms of domain architecture, Rhodanese spans 12-136; sequence FLHDVPLLDV…LRMFLIDTTQ (125 aa). Residue Cys-95 is the S-selanylcysteine intermediate of the active site.

It belongs to the SelU family. As to quaternary structure, monomer.

It carries out the reaction 5-methylaminomethyl-2-thiouridine(34) in tRNA + selenophosphate + (2E)-geranyl diphosphate + H2O + H(+) = 5-methylaminomethyl-2-selenouridine(34) in tRNA + (2E)-thiogeraniol + phosphate + diphosphate. The enzyme catalyses 5-methylaminomethyl-2-thiouridine(34) in tRNA + (2E)-geranyl diphosphate = 5-methylaminomethyl-S-(2E)-geranyl-thiouridine(34) in tRNA + diphosphate. It catalyses the reaction 5-methylaminomethyl-S-(2E)-geranyl-thiouridine(34) in tRNA + selenophosphate + H(+) = 5-methylaminomethyl-2-(Se-phospho)selenouridine(34) in tRNA + (2E)-thiogeraniol. The catalysed reaction is 5-methylaminomethyl-2-(Se-phospho)selenouridine(34) in tRNA + H2O = 5-methylaminomethyl-2-selenouridine(34) in tRNA + phosphate. Involved in the post-transcriptional modification of the uridine at the wobble position (U34) of tRNA(Lys), tRNA(Glu) and tRNA(Gln). Catalyzes the conversion of 2-thiouridine (S2U-RNA) to 2-selenouridine (Se2U-RNA). Acts in a two-step process involving geranylation of 2-thiouridine (S2U) to S-geranyl-2-thiouridine (geS2U) and subsequent selenation of the latter derivative to 2-selenouridine (Se2U) in the tRNA chain. The sequence is that of tRNA 2-selenouridine synthase from Verminephrobacter eiseniae (strain EF01-2).